A 170-amino-acid chain; its full sequence is Chorion protein S18 (170 aa).

The signal sequence occupies residues 1 to 17; that stretch reads MMKFMCIFVCAIAAVSA. Residues 146–159 are compositionally biased toward low complexity; sequence AAAASSSVAGQHSG. The disordered stretch occupies residues 146–170; sequence AAAASSSVAGQHSGYKNSGYKNSSY. Positions 160–170 are enriched in polar residues; that stretch reads YKNSGYKNSSY.

This sequence belongs to the chorion protein S15/S18 family.

The protein resides in the secreted. In terms of biological role, chorion membrane (egg shell) protein; plays a role in protecting the egg from the environment. In Drosophila virilis (Fruit fly), this protein is Chorion protein S18 (Cp18).